Here is a 271-residue protein sequence, read N- to C-terminus: MSEALIGGGAKKVYILSRRRDVLESAAAKHEGILIPIQCDVTSKASLQSAVDIVTKDSGYVNLLIANSGTLGPTNRLDHDLSIHELRKNVFDNVSFEDFNNTLSVNTTGAYFTMLAFLELLDAGNKNALKGGFGGPSTEGGAPSIQSQVIFTSSLGAYSRDRLSPPAYSASKSALSHLAKHASTNLAKYGIRVNVLAPGLFPSEIATLMTANRDPATENLGDRMFIPARKFGGAEEMGGTVLYLASRAGSYCNGLILVNDGGRLSVMLSEY.

NADP(+)-binding residues include S17, D40, and N67. Residue S153 is the Proton donor of the active site. NADP(+) contacts are provided by Y168, K172, and S203. Residue Y168 is the Proton acceptor of the active site. K172 (lowers pKa of active site Tyr) is an active-site residue.

Belongs to the short-chain dehydrogenases/reductases (SDR) family.

It functions in the pathway mycotoxin biosynthesis. Its function is as follows. Short-chain dehydrogenase/reductase; part of the satratoxin SC1 cluster involved in the biosynthesis of satratoxins, trichothecene mycotoxins that are associated with human food poisonings. Satratoxins are suggested to be made by products of multiple gene clusters (SC1, SC2 and SC3) that encode 21 proteins in all, including polyketide synthases, acetyltransferases, and other enzymes expected to modify the trichothecene skeleton. SC1 encodes 10 proteins, SAT1 to SAT10. The largest are SAT8, which encodes a putative polyketide synthase (PKS) with a conventional non-reducing architecture, and SAT10, a putative protein containing four ankyrin repeats and thus may be involved in protein scaffolding. The putative short-chain reductase SAT3 may assist the PKS in some capacity. SAT6 contains a secretory lipase domain and acts probably as a trichothecene esterase. SAT5 encodes a putative acetyltransferase, and so, with SAT6, may affect endogenous protection from toxicity. The probable transcription factor SAT9 may regulate the expression of the SC1 cluster. SC2 encodes proteins SAT11 to SAT16, the largest of which encodes the putative reducing PKS SAT13. SAT11 is a cytochrome P450 monooxygenase, while SAT14 and SAT16 are probable acetyltransferases. The SC2 cluster may be regulated by the transcription factor SAT15. SC3 is a small cluster that encodes 5 proteins, SAT17 to SAT21. SAT21 is a putative MFS-type transporter which may have a role in exporting secondary metabolites. The four other proteins putatively encoded in SC3 include the taurine hydroxylase-like protein SAT17, the O-methyltransferase SAT18, the acetyltransferase SAT19, and the Cys6-type zinc finger SAT20, the latter being probably involved in regulation of SC3 expression. The polypeptide is Short-chain dehydrogenase/reductase SAT3 (Stachybotrys chartarum (strain CBS 109288 / IBT 7711) (Toxic black mold)).